The chain runs to 237 residues: Phosphoribosylaminoimidazole-succinocarboxamide synthase (237 aa).

It belongs to the SAICAR synthetase family.

The enzyme catalyses 5-amino-1-(5-phospho-D-ribosyl)imidazole-4-carboxylate + L-aspartate + ATP = (2S)-2-[5-amino-1-(5-phospho-beta-D-ribosyl)imidazole-4-carboxamido]succinate + ADP + phosphate + 2 H(+). It functions in the pathway purine metabolism; IMP biosynthesis via de novo pathway; 5-amino-1-(5-phospho-D-ribosyl)imidazole-4-carboxamide from 5-amino-1-(5-phospho-D-ribosyl)imidazole-4-carboxylate: step 1/2. The polypeptide is Phosphoribosylaminoimidazole-succinocarboxamide synthase (Listeria monocytogenes serotype 4b (strain CLIP80459)).